The following is a 485-amino-acid chain: ATP synthase subunit beta (485 aa).

Residue G170–T177 participates in ATP binding.

This sequence belongs to the ATPase alpha/beta chains family. In terms of assembly, F-type ATPases have 2 components, CF(1) - the catalytic core - and CF(0) - the membrane proton channel. CF(1) has five subunits: alpha(3), beta(3), gamma(1), delta(1), epsilon(1). CF(0) has three main subunits: a(1), b(2) and c(9-12). The alpha and beta chains form an alternating ring which encloses part of the gamma chain. CF(1) is attached to CF(0) by a central stalk formed by the gamma and epsilon chains, while a peripheral stalk is formed by the delta and b chains.

The protein localises to the cell membrane. The catalysed reaction is ATP + H2O + 4 H(+)(in) = ADP + phosphate + 5 H(+)(out). Functionally, produces ATP from ADP in the presence of a proton gradient across the membrane. The catalytic sites are hosted primarily by the beta subunits. This chain is ATP synthase subunit beta, found in Salinispora arenicola (strain CNS-205).